The chain runs to 152 residues: MSVLGVGCDVVHLPRMHRLLTKYDAGSRGFQRVVSKFMHPTERIALGVDGASLSAGQIRYIAGTWALKEAALKALHCAAPLHTVLPPAMFIYTKLLYRQRRSNGVPQLLLDNEALRLDQLQFLRQAKFLSTLSHDNEYLVAYTTLIDTKNLV.

This sequence belongs to the P-Pant transferase superfamily. AcpS family.

The protein localises to the mitochondrion. The catalysed reaction is apo-[ACP] + CoA = holo-[ACP] + adenosine 3',5'-bisphosphate + H(+). Functionally, transfers the 4'-phosphopantetheine moiety from coenzyme A to a Ser of mitochondrial acyl-carrier-protein. The protein is Mitochondrial holo-[acyl-carrier-protein] synthase (PPT2) of Candida glabrata (strain ATCC 2001 / BCRC 20586 / JCM 3761 / NBRC 0622 / NRRL Y-65 / CBS 138) (Yeast).